The sequence spans 97 residues: MDPKISEMHPALRLVDPQIQLAVTRMENAVGRDQNNVGPKVYPIILRLGSPLSLNMARKTLNSLEDKAFQLTPIAVQMTKLATTEELPDEFVVVTVK.

Residues 8–97 (MHPALRLVDP…PDEFVVVTVK (90 aa)) form the 9b domain. The Nuclear export signal signature appears at 45 to 53 (ILRLGSPLS).

It belongs to the coronavirus group 2 protein 9b family. As to quaternary structure, homodimer. Interacts with host TOMM70; the interaction occurs only with monomer.

The protein localises to the host cytoplasm. The protein resides in the host mitochondrion. Its function is as follows. Plays a role in inhibiting the host innate immune response by targeting the mitochondrial-associated innate immune response. Acts by binding to host TOMM70, inhibiting its binding to HSP90AB1 thereby disrupting the interferon activation pathway. This is ORF9b protein from Homo sapiens (Human).